The chain runs to 245 residues: tRNA (guanine-N(1)-)-methyltransferase (245 aa).

S-adenosyl-L-methionine-binding positions include Gly113 and 133-138 (IGDYVL).

The protein belongs to the RNA methyltransferase TrmD family. Homodimer.

The protein localises to the cytoplasm. The catalysed reaction is guanosine(37) in tRNA + S-adenosyl-L-methionine = N(1)-methylguanosine(37) in tRNA + S-adenosyl-L-homocysteine + H(+). In terms of biological role, specifically methylates guanosine-37 in various tRNAs. This Histophilus somni (strain 129Pt) (Haemophilus somnus) protein is tRNA (guanine-N(1)-)-methyltransferase.